The following is a 160-amino-acid chain: Ribosomal RNA large subunit methyltransferase H (160 aa).

Residues L77, G109, and 128 to 133 (FGRITL) each bind S-adenosyl-L-methionine.

This sequence belongs to the RNA methyltransferase RlmH family. In terms of assembly, homodimer.

The protein localises to the cytoplasm. The enzyme catalyses pseudouridine(1915) in 23S rRNA + S-adenosyl-L-methionine = N(3)-methylpseudouridine(1915) in 23S rRNA + S-adenosyl-L-homocysteine + H(+). Its function is as follows. Specifically methylates the pseudouridine at position 1915 (m3Psi1915) in 23S rRNA. This chain is Ribosomal RNA large subunit methyltransferase H, found in Oenococcus oeni (strain ATCC BAA-331 / PSU-1).